Reading from the N-terminus, the 363-residue chain is Galactokinase (363 aa).

16–19 (EHTD) serves as a coordination point for substrate. ATP is bound by residues S50 and 103–109 (GSGLSSS). The Mg(2+) site is built by S109 and E141. Residue D153 is the Proton acceptor of the active site. Y205 lines the substrate pocket.

It belongs to the GHMP kinase family. GalK subfamily.

Its subcellular location is the cytoplasm. The catalysed reaction is alpha-D-galactose + ATP = alpha-D-galactose 1-phosphate + ADP + H(+). It participates in carbohydrate metabolism; galactose metabolism. Catalyzes the transfer of the gamma-phosphate of ATP to D-galactose to form alpha-D-galactose-1-phosphate (Gal-1-P). In Mycobacterium bovis (strain ATCC BAA-935 / AF2122/97), this protein is Galactokinase.